A 520-amino-acid polypeptide reads, in one-letter code: Pleckstrin homology domain-containing family O member 1-A (520 aa).

Disordered regions lie at residues 1–23, 208–296, 313–439, and 497–520; these read MKKSHLVKRGLQDANQPSSQPDK, SLDK…GHLQ, IQEQ…KSTD, and QARQRREELSKTGMASQKLQQKSP. One can recognise a PH domain in the interval 20 to 131; the sequence is QPDKVGWIRR…WINVLNTAIT (112 aa). Residues 227–241 are compositionally biased toward polar residues; that stretch reads PASNTEAQEKTSSLP. Basic and acidic residues-rich tracts occupy residues 242–255 and 333–347; these read RKSEISWSQEDHPR and DSPRLRHLKGSDSPH. Residues 348–361 show a composition bias toward low complexity; sequence SKGSSSPHSANSPS. Basic and acidic residues-rich tracts occupy residues 363-385 and 396-418; these read RAKDSPSSKSKESPHAKSKDSPR and KSIDSPDSKESSSLHMKCIDLTH. The span at 420–439 shows a compositional bias: polar residues; the sequence is KGSQSPLSTGSNSPHMKSTD. A compositionally biased stretch (basic and acidic residues) spans 497-506; sequence QARQRREELS. Polar residues predominate over residues 509-520; it reads GMASQKLQQKSP.

C-terminal fragments could be released during apoptosis via caspase-3-dependent cleavage.

The protein localises to the membrane. The protein resides in the nucleus. Its subcellular location is the cytoplasm. Functionally, plays a role in the regulation of the actin cytoskeleton through its interactions with actin capping protein (CP). The sequence is that of Pleckstrin homology domain-containing family O member 1-A (plekho1a) from Danio rerio (Zebrafish).